Consider the following 236-residue polypeptide: 2-C-methyl-D-erythritol 4-phosphate cytidylyltransferase (236 aa).

The protein belongs to the IspD/TarI cytidylyltransferase family. IspD subfamily. Homodimer.

It catalyses the reaction 2-C-methyl-D-erythritol 4-phosphate + CTP + H(+) = 4-CDP-2-C-methyl-D-erythritol + diphosphate. The protein operates within isoprenoid biosynthesis; isopentenyl diphosphate biosynthesis via DXP pathway; isopentenyl diphosphate from 1-deoxy-D-xylulose 5-phosphate: step 2/6. Its function is as follows. Catalyzes the formation of 4-diphosphocytidyl-2-C-methyl-D-erythritol from CTP and 2-C-methyl-D-erythritol 4-phosphate (MEP). This chain is 2-C-methyl-D-erythritol 4-phosphate cytidylyltransferase, found in Salmonella arizonae (strain ATCC BAA-731 / CDC346-86 / RSK2980).